The sequence spans 482 residues: MATKTLSILFAASEVEGLIKSGGLADVAKALPKSLKDLGHEIHIAMPAYSAIPERDDAEVLLSSTLEHWPHTPYQVRSLSVEGITVLGIECADYFDRAEMYAENNQAYADNGERFAFFSAACLDMLPKLKIKPDVIHANDWHTGLLPYLLKKRYANDAYFSQVRSVLSVHNAVFKGIFHYDDIGCLSEFKTHYVPEAAVSHTHISMLKAGVQCADKINAVSPTYAKELLTELGSHGMASDFQAREPDLFGILNGCDYSEWSPETDTFIPKQFKANRISMVRGKKVCKAALQEEVGLPQKEVAMYGMVCRLTNQKGIHYLLPILEQFLKHDLQIVIVGTGDPVLAAQLTEIAAIHSDKFAFVEAYSNKLAHWIEASSDFFLMPSEFEPCGLNQIYSMSYGALPIVRAVGGLKDSVIDYDSDNENATGFSFINPEPTELLLVLMRSLLLYAQDLNEVKRIQLHAMKQNFSWSDAAEKYVEMYLD.

Lysine 20 serves as a coordination point for ADP-alpha-D-glucose.

The protein belongs to the glycosyltransferase 1 family. Bacterial/plant glycogen synthase subfamily.

The enzyme catalyses [(1-&gt;4)-alpha-D-glucosyl](n) + ADP-alpha-D-glucose = [(1-&gt;4)-alpha-D-glucosyl](n+1) + ADP + H(+). It participates in glycan biosynthesis; glycogen biosynthesis. Its function is as follows. Synthesizes alpha-1,4-glucan chains using ADP-glucose. The chain is Glycogen synthase from Aliivibrio salmonicida (strain LFI1238) (Vibrio salmonicida (strain LFI1238)).